Consider the following 99-residue polypeptide: Large ribosomal subunit protein P1 (99 aa).

As to quaternary structure, part of the 50S ribosomal subunit. Homodimer, it forms part of the ribosomal stalk which helps the ribosome interact with GTP-bound translation factors. Forms both a pentameric uL10/P0(P1)2(P1)2 and heptameric uL10/P0(P1)2(P1)2(P1)2 complex, where uL10/P0 forms an elongated spine to which the P1 dimers bind in a sequential fashion. The proportion of heptameric complexes increases during cell growth.

Its function is as follows. Forms part of the ribosomal stalk, playing a central role in the interaction of the ribosome with GTP-bound translation factors. The sequence is that of Large ribosomal subunit protein P1 from Methanococcus vannielii.